Here is a 73-residue protein sequence, read N- to C-terminus: DNA-directed RNA polymerase subunit epsilon (73 aa).

It belongs to the RNA polymerase subunit epsilon family. As to quaternary structure, RNAP is composed of a core of 2 alpha, a beta and a beta' subunit. The core is associated with a delta subunit, and at least one of epsilon or omega. When a sigma factor is associated with the core the holoenzyme is formed, which can initiate transcription.

It carries out the reaction RNA(n) + a ribonucleoside 5'-triphosphate = RNA(n+1) + diphosphate. A non-essential component of RNA polymerase (RNAP). The protein is DNA-directed RNA polymerase subunit epsilon of Lactobacillus acidophilus (strain ATCC 700396 / NCK56 / N2 / NCFM).